The sequence spans 173 residues: Crossover junction endodeoxyribonuclease RuvC (173 aa).

Catalysis depends on residues Asp8, Glu67, and Asp139. Mg(2+) contacts are provided by Asp8, Glu67, and Asp139.

This sequence belongs to the RuvC family. Homodimer which binds Holliday junction (HJ) DNA. The HJ becomes 2-fold symmetrical on binding to RuvC with unstacked arms; it has a different conformation from HJ DNA in complex with RuvA. In the full resolvosome a probable DNA-RuvA(4)-RuvB(12)-RuvC(2) complex forms which resolves the HJ. Mg(2+) serves as cofactor.

Its subcellular location is the cytoplasm. The catalysed reaction is Endonucleolytic cleavage at a junction such as a reciprocal single-stranded crossover between two homologous DNA duplexes (Holliday junction).. Its function is as follows. The RuvA-RuvB-RuvC complex processes Holliday junction (HJ) DNA during genetic recombination and DNA repair. Endonuclease that resolves HJ intermediates. Cleaves cruciform DNA by making single-stranded nicks across the HJ at symmetrical positions within the homologous arms, yielding a 5'-phosphate and a 3'-hydroxyl group; requires a central core of homology in the junction. The consensus cleavage sequence is 5'-(A/T)TT(C/G)-3'. Cleavage occurs on the 3'-side of the TT dinucleotide at the point of strand exchange. HJ branch migration catalyzed by RuvA-RuvB allows RuvC to scan DNA until it finds its consensus sequence, where it cleaves and resolves the cruciform DNA. The polypeptide is Crossover junction endodeoxyribonuclease RuvC (Salmonella choleraesuis (strain SC-B67)).